The chain runs to 576 residues: Vesicular glutamate transporter 1 (576 aa).

The Cytoplasmic portion of the chain corresponds to 1-63; it reads MEFRKEEFKK…CTCFGLPRRY (63 aa). Residues 64-84 traverse the membrane as a helical segment; that stretch reads IIAIMSGLGFCISFGIRCNLG. Over 85–116 the chain is Vesicular; the sequence is VAIVSMVNNNTVYKGNKIVIEQAQFTWDPETV. Asn-93 is a glycosylation site (N-linked (GlcNAc...) asparagine). The helical transmembrane segment at 117–137 threads the bilayer; that stretch reads GMIHGSFFWGYIVTQIPGGYI. At 138–140 the chain is on the cytoplasmic side; it reads CQK. The helical transmembrane segment at 141 to 161 threads the bilayer; that stretch reads FAANRVFGFAIVATSTLNMLI. The Vesicular portion of the chain corresponds to 162 to 168; sequence PSAARVH. Residues 169 to 189 traverse the membrane as a helical segment; sequence FACVICVRILQGLVEGVTYPA. The Cytoplasmic segment spans residues 190–208; that stretch reads CHGIWSKWAPPLERSRLAT. The chain crosses the membrane as a helical span at residues 209-229; that stretch reads TAFCGSYAGAVVAMPLAGVLV. The Vesicular segment spans residues 230 to 236; sequence QYSGWSS. Residues 237-257 form a helical membrane-spanning segment; that stretch reads VFYVYGSFGIMWYMFWILVSY. Over 258–302 the chain is Cytoplasmic; it reads ESPAIHPTISEEEKKYIEESIGESTGLMNPMAKFKAPWRKFFTSM. Residues 303–323 form a helical membrane-spanning segment; the sequence is PVYAIIVANFCRSWTFYLLLI. The Vesicular portion of the chain corresponds to 324–341; that stretch reads SQPAYFEEVFGFEISKVG. A helical membrane pass occupies residues 342-362; that stretch reads LLSALPHLVMTIIVPIGGQIA. At 363-378 the chain is on the cytoplasmic side; sequence DFLRTKRIMSTTNVRK. The helical transmembrane segment at 379 to 399 threads the bilayer; it reads MMNCGGFGMEATLLLVVGYSH. The Vesicular segment spans residues 400-401; it reads SR. A helical membrane pass occupies residues 402 to 422; the sequence is GVAISFLVLAVGFSGFAISGF. Topologically, residues 423–435 are cytoplasmic; that stretch reads NVNHLDIAPRYAS. Residues 436-456 traverse the membrane as a helical segment; sequence ILMGISNGVGTLSGMVCPLIV. The Vesicular segment spans residues 457–469; sequence GAMTKHKTREEWQ. Residues 470–490 traverse the membrane as a helical segment; the sequence is YVFLIASLVHYGGVLFYGIFA. The Cytoplasmic segment spans residues 491-576; sequence SGEKQPWAEP…YGTVAERDLS (86 aa). The interval 517 to 547 is disordered; sequence ADESEEQSQAYGAYGSYGATQTTSQQNGGWT. Positions 534–545 are enriched in polar residues; sequence GATQTTSQQNGG.

The protein belongs to the major facilitator superfamily. Sodium/anion cotransporter family. VGLUT subfamily.

It localises to the cytoplasmic vesicle. It is found in the secretory vesicle. The protein resides in the synaptic vesicle membrane. The protein localises to the cell membrane. Its subcellular location is the synapse. It localises to the synaptosome. It carries out the reaction L-glutamate(out) = L-glutamate(in). The enzyme catalyses chloride(in) = chloride(out). It catalyses the reaction 3 Na(+)(out) + phosphate(out) = 3 Na(+)(in) + phosphate(in). The catalysed reaction is phosphate(in) = phosphate(out). It carries out the reaction K(+)(in) + H(+)(out) = K(+)(out) + H(+)(in). Chloride channel activity is allosterically activated by lumenal H(+) and Cl(-) leading to synaptic vesicles acidification. The L-glutamate transport activity is allosterically activated by lumenal H(+) and Cl(-). The allosteric activation by H(+) efficiently prevents non-vesicular efflux across the plasma membrane, thereby restricting L-glutamate transport activity to acidic membranes such as synaptic vesicles. Multifunctional transporter that transports L-glutamate as well as multiple ions such as chloride, proton, potassium, sodium and phosphate. At the synaptic vesicle membrane, mainly functions as an uniporter which transports preferentially L-glutamate but also phosphate from the cytoplasm into synaptic vesicles at presynaptic nerve terminals of excitatory neural cells. The L-glutamate or phosphate uniporter activity is electrogenic and is driven by the proton electrochemical gradient, mainly by the electrical gradient established by the vacuolar H(+)-ATPase across the synaptic vesicle membrane. In addition, functions as a chloride channel that allows a chloride permeation through the synaptic vesicle membrane that affects the proton electrochemical gradient and promotes synaptic vesicles acidification. Moreover, may function as a K(+)/H(+) antiport allowing to maintain the electrical gradient and to decrease chemical gradient and therefore sustain vesicular glutamate uptake. The vesicular K(+)/H(+) antiport activity is electroneutral. At the plasma membrane, following exocytosis, functions as a symporter of Na(+) and phosphate from the extracellular space to the cytoplasm allowing synaptic phosphate homeostasis regulation. The symporter activity is driven by an inside negative membrane potential and is electrogenic. Is necessary for synaptic signaling of visual-evoked responses from photoreceptors. This is Vesicular glutamate transporter 1 from Xenopus tropicalis (Western clawed frog).